The following is a 61-amino-acid chain: Small ribosomal subunit protein uS14 (61 aa).

Zn(2+)-binding residues include cysteine 24, cysteine 27, cysteine 40, and cysteine 43.

It belongs to the universal ribosomal protein uS14 family. Zinc-binding uS14 subfamily. As to quaternary structure, part of the 30S ribosomal subunit. Contacts proteins S3 and S10. The cofactor is Zn(2+).

Binds 16S rRNA, required for the assembly of 30S particles and may also be responsible for determining the conformation of the 16S rRNA at the A site. The protein is Small ribosomal subunit protein uS14 of Aliarcobacter butzleri (strain RM4018) (Arcobacter butzleri).